Reading from the N-terminus, the 39-residue chain is Fructose 5-dehydrogenase [NADP(+)] (39 aa).

The catalysed reaction is D-fructose + NADP(+) = 5-dehydro-D-fructose + NADPH + H(+). This Erwinia citreus protein is Fructose 5-dehydrogenase [NADP(+)].